Reading from the N-terminus, the 31-residue chain is Cytochrome b6-f complex subunit 6 (31 aa).

Residues 5–25 (ISYLGILVGALLFVTITFLTL) traverse the membrane as a helical segment.

This sequence belongs to the PetL family. The 4 large subunits of the cytochrome b6-f complex are cytochrome b6, subunit IV (17 kDa polypeptide, PetD), cytochrome f and the Rieske protein, while the 4 small subunits are PetG, PetL, PetM and PetN. The complex functions as a dimer.

The protein localises to the plastid. Its subcellular location is the chloroplast thylakoid membrane. Its function is as follows. Component of the cytochrome b6-f complex, which mediates electron transfer between photosystem II (PSII) and photosystem I (PSI), cyclic electron flow around PSI, and state transitions. PetL is important for photoautotrophic growth as well as for electron transfer efficiency and stability of the cytochrome b6-f complex. This Chlorokybus atmophyticus (Soil alga) protein is Cytochrome b6-f complex subunit 6.